A 189-amino-acid polypeptide reads, in one-letter code: MFWLLALLAYLLGSLSFAIVLSRLSGSPDPRSSGSGNAGATNMLRLAGRKLAILTLLGDLCKGLLPVLLARAAGLDLHAQAWVGVCAVLGHLFPLYFRFQGGKGVATAAGMLMGLYFPAALLAIGAWLLTFYLTRTSSLAALIATPLTLPLLAWREPEALLPITVLTAMIVWRHRKNLRDLFAGRERHF.

5 consecutive transmembrane segments (helical) span residues 1–21, 50–70, 77–97, 111–131, and 151–171; these read MFWL…AIVL, KLAI…VLLA, LHAQ…PLYF, MLMG…LLTF, and LLAW…AMIV.

It belongs to the PlsY family. In terms of assembly, probably interacts with PlsX.

It is found in the cell inner membrane. It catalyses the reaction an acyl phosphate + sn-glycerol 3-phosphate = a 1-acyl-sn-glycero-3-phosphate + phosphate. The protein operates within lipid metabolism; phospholipid metabolism. Its function is as follows. Catalyzes the transfer of an acyl group from acyl-phosphate (acyl-PO(4)) to glycerol-3-phosphate (G3P) to form lysophosphatidic acid (LPA). This enzyme utilizes acyl-phosphate as fatty acyl donor, but not acyl-CoA or acyl-ACP. The chain is Glycerol-3-phosphate acyltransferase from Pseudomonas putida (strain GB-1).